A 579-amino-acid chain; its full sequence is YTH domain-containing family protein 2 (579 aa).

The segment at 1-45 (MSASSLLEQRPKGQGNKVQNGSVHQKDGLNDDDFEPYLSPQARPN) is disordered. S2 carries the post-translational modification N-acetylserine. Phosphoserine is present on residues S2, S4, S5, S22, S39, and S196. The segment at 2 to 384 (SASSLLEQRP…QAGSGSTPSE (383 aa)) is localization to mRNA processing bodies (P-bodies). The tract at residues 247–387 (AKQQPKLKTK…SGSTPSEPHP (141 aa)) is disordered. Residues 291-316 (ALVQNIGQPTQGSPQHVGQQANNSPP) are compositionally biased toward polar residues. Over residues 337–349 (AQLSVQQQAAQPT) the composition is skewed to low complexity. At S359 the chain carries Phosphoserine. Residues 359-371 (SGFGHNGVDGNGV) are compositionally biased toward gly residues. Polar residues predominate over residues 372 to 383 (GQSQAGSGSTPS). Positions 385 to 579 (PHPVLEKLRS…VKKERQGRGK (195 aa)) are interaction with m6A-containing mRNAs. S394 carries the phosphoserine modification. Positions 410–544 (GRVFIIKSYS…EKAKQVLKII (135 aa)) constitute a YTH domain. RNA is bound by residues 416-418 (KSY), D422, 432-433 (WC), N462, W486, and W491.

The protein belongs to the YTHDF family. YTHDF2 subfamily. Interacts with CNOT1; interaction is direct and promotes recruitment of the CCR4-NOT complex. Interacts with YTHDF3. Interacts with RIDA/HRSP12; interaction leads to recruitment of the ribonuclease P/MRP complex. Ubiquitinated by the SCF(SKP2) complex, leading to its degradation.

It localises to the cytoplasm. It is found in the cytosol. Its subcellular location is the P-body. The protein localises to the stress granule. The protein resides in the nucleus. In terms of biological role, specifically recognizes and binds N6-methyladenosine (m6A)-containing RNAs, and regulates their stability. M6A is a modification present at internal sites of mRNAs and some non-coding RNAs and plays a role in mRNA stability and processing. Acts as a regulator of mRNA stability by promoting degradation of m6A-containing mRNAs via interaction with the CCR4-NOT and ribonuclease P/MRP complexes, depending on the context. The YTHDF paralogs (YTHDF1, YTHDF2 and YTHDF3) share m6A-containing mRNAs targets and act redundantly to mediate mRNA degradation and cellular differentiation. M6A-containing mRNAs containing a binding site for RIDA/HRSP12 (5'-GGUUC-3') are preferentially degraded by endoribonucleolytic cleavage: cooperative binding of RIDA/HRSP12 and YTHDF2 to transcripts leads to recruitment of the ribonuclease P/MRP complex. Other m6A-containing mRNAs undergo deadenylation via direct interaction between YTHDF2 and CNOT1, leading to recruitment of the CCR4-NOT and subsequent deadenylation of m6A-containing mRNAs. Required maternally to regulate oocyte maturation: probably acts by binding to m6A-containing mRNAs, thereby regulating maternal transcript dosage during oocyte maturation, which is essential for the competence of oocytes to sustain early zygotic development. Also required during spermatogenesis: regulates spermagonial adhesion by promoting degradation of m6A-containing transcripts coding for matrix metallopeptidases. Also involved in hematopoietic stem cells specification by binding to m6A-containing mRNAs, leading to promote their degradation. Also acts as a regulator of neural development by promoting m6A-dependent degradation of neural development-related mRNA targets. Inhibits neural specification of induced pluripotent stem cells by binding to methylated neural-specific mRNAs and promoting their degradation, thereby restraining neural differentiation. Regulates circadian regulation of hepatic lipid metabolism: acts by promoting m6A-dependent degradation of PPARA transcripts. Regulates the innate immune response to infection by inhibiting the type I interferon response: acts by binding to m6A-containing IFNB transcripts and promoting their degradation. May also act as a promoter of cap-independent mRNA translation following heat shock stress: upon stress, relocalizes to the nucleus and specifically binds mRNAs with some m6A methylation mark at their 5'-UTR, protecting demethylation of mRNAs by FTO, thereby promoting cap-independent mRNA translation. Regulates mitotic entry by promoting the phase-specific m6A-dependent degradation of WEE1 transcripts. Promotes formation of phase-separated membraneless compartments, such as P-bodies or stress granules, by undergoing liquid-liquid phase separation upon binding to mRNAs containing multiple m6A-modified residues: polymethylated mRNAs act as a multivalent scaffold for the binding of YTHDF proteins, juxtaposing their disordered regions and thereby leading to phase separation. The resulting mRNA-YTHDF complexes then partition into different endogenous phase-separated membraneless compartments, such as P-bodies, stress granules or neuronal RNA granules. May also recognize and bind RNAs modified by C5-methylcytosine (m5C) and act as a regulator of rRNA processing. In Macaca fascicularis (Crab-eating macaque), this protein is YTH domain-containing family protein 2.